The primary structure comprises 295 residues: Bifunctional protein FolD (295 aa).

NADP(+) contacts are provided by residues 166–168 (GRS), Ser-191, and Ile-232.

Belongs to the tetrahydrofolate dehydrogenase/cyclohydrolase family. In terms of assembly, homodimer.

It carries out the reaction (6R)-5,10-methylene-5,6,7,8-tetrahydrofolate + NADP(+) = (6R)-5,10-methenyltetrahydrofolate + NADPH. The catalysed reaction is (6R)-5,10-methenyltetrahydrofolate + H2O = (6R)-10-formyltetrahydrofolate + H(+). The protein operates within one-carbon metabolism; tetrahydrofolate interconversion. Functionally, catalyzes the oxidation of 5,10-methylenetetrahydrofolate to 5,10-methenyltetrahydrofolate and then the hydrolysis of 5,10-methenyltetrahydrofolate to 10-formyltetrahydrofolate. This Rhodopseudomonas palustris (strain BisB5) protein is Bifunctional protein FolD.